The chain runs to 231 residues: MKAITLLSSGLDSVAALAIAAEDFDIEMAITFDYGQRAREREIEYSRKVCEYFGIEHRVIKLDWLSEITSTSLVNRDVEVPSLSFEDIGEAAPAEITDASAKAVWVPNRNGVMLNIAGSFAESRECEYLVVGFNGEEAGTFPDNSLDYVKAMDRAFFYSTQNGVKILAPLIELGKTEIVRRALEAKAPLEYSWSCYRGEEIPCGECESCVRRARAFKNAGVKDPLLERLGI.

7 to 17 is an ATP binding site; that stretch reads LSSGLDSVAAL. The Zn(2+) site is built by Cys195, Cys203, Cys206, and Cys209.

The protein belongs to the QueC family. The cofactor is Zn(2+).

It carries out the reaction 7-carboxy-7-deazaguanine + NH4(+) + ATP = 7-cyano-7-deazaguanine + ADP + phosphate + H2O + H(+). It functions in the pathway purine metabolism; 7-cyano-7-deazaguanine biosynthesis. Functionally, catalyzes the ATP-dependent conversion of 7-carboxy-7-deazaguanine (CDG) to 7-cyano-7-deazaguanine (preQ(0)). The protein is 7-cyano-7-deazaguanine synthase of Methanosarcina barkeri (strain Fusaro / DSM 804).